The following is a 617-amino-acid chain: Vacuolar protein sorting-associated protein 33B (617 aa).

The residue at position 2 (Ala-2) is an N-acetylalanine.

Belongs to the STXBP/unc-18/SEC1 family. As to quaternary structure, interacts with RAB11A and VIPAS39. Interacts with RAB25. Associates with adapter protein complex 3 (AP-3), clathrin:AP-3 and clathrin:HGS complexes. In terms of assembly, (Microbial infection) Interacts with M.tuberculosis PtpA. Post-translationally, phosphorylated on tyrosine residues. (Microbial infection) Dephosphorylated by M.tuberculosis PtpA, which induces the reduction of host phagolysosome fusion in M.tuberculosis-infected macrophages. In terms of tissue distribution, ubiquitous; highly expressed in testis and low expression in the lung.

The protein localises to the late endosome membrane. The protein resides in the lysosome membrane. Its subcellular location is the early endosome. It localises to the cytoplasmic vesicle. It is found in the clathrin-coated vesicle. The protein localises to the recycling endosome. Its function is as follows. May play a role in vesicle-mediated protein trafficking to lysosomal compartments and in membrane docking/fusion reactions of late endosomes/lysosomes. Required for proper trafficking and targeting of the collagen-modifying enzyme lysyl hydroxylase 3 (LH3) to intracellular collagen. Mediates phagolysosomal fusion in macrophages. Proposed to be involved in endosomal maturation implicating VIPAS39. In epithelial cells, the VPS33B:VIPAS39 complex may play a role in the apical recycling pathway and in the maintenance of the apical-basolateral polarity. Seems to be involved in the sorting of specific cargos from the trans-Golgi network to alpha-granule-destined multivesicular bodies (MVBs) promoting MVBs maturation in megakaryocytes. In Homo sapiens (Human), this protein is Vacuolar protein sorting-associated protein 33B (VPS33B).